Consider the following 127-residue polypeptide: Venom protein family 16 protein 1 (127 aa).

A signal peptide spans 1 to 18 (MWIWYSLLFFGVCHLAHS).

As to expression, expressed by the venom gland (anterior main gland) (at protein level).

The protein localises to the secreted. The chain is Venom protein family 16 protein 1 from Platymeris rhadamanthus (Red spot assassin bug).